A 537-amino-acid chain; its full sequence is Cytochrome P450 CYP12A2 (537 aa).

Cys483 serves as a coordination point for heme.

Belongs to the cytochrome P450 family. Heme serves as cofactor.

This Musca domestica (House fly) protein is Cytochrome P450 CYP12A2 (CYP12A2).